The primary structure comprises 82 residues: ATP synthase subunit c, chloroplastic (82 aa).

Helical transmembrane passes span 3–23 (PIVAAASVIAAGLAVGLAAIG) and 57–77 (FAFMESLTIYGLVVALALLFA).

The protein belongs to the ATPase C chain family. In terms of assembly, F-type ATPases have 2 components, F(1) - the catalytic core - and F(0) - the membrane proton channel. F(1) has five subunits: alpha(3), beta(3), gamma(1), delta(1), epsilon(1). F(0) has four main subunits: a(1), b(1), b'(1) and c(10-14). The alpha and beta chains form an alternating ring which encloses part of the gamma chain. F(1) is attached to F(0) by a central stalk formed by the gamma and epsilon chains, while a peripheral stalk is formed by the delta, b and b' chains.

The protein resides in the plastid. It is found in the chloroplast thylakoid membrane. Functionally, f(1)F(0) ATP synthase produces ATP from ADP in the presence of a proton or sodium gradient. F-type ATPases consist of two structural domains, F(1) containing the extramembraneous catalytic core and F(0) containing the membrane proton channel, linked together by a central stalk and a peripheral stalk. During catalysis, ATP synthesis in the catalytic domain of F(1) is coupled via a rotary mechanism of the central stalk subunits to proton translocation. Key component of the F(0) channel; it plays a direct role in translocation across the membrane. A homomeric c-ring of between 10-14 subunits forms the central stalk rotor element with the F(1) delta and epsilon subunits. This Chlorella vulgaris (Green alga) protein is ATP synthase subunit c, chloroplastic.